The following is a 713-amino-acid chain: Probable 1-deoxy-D-xylulose-5-phosphate synthase 2, chloroplastic (713 aa).

The N-terminal 30 residues, 1–30 (MALQASSSPSMFRAIPTNTNASCRRKLQVR), are a transit peptide targeting the chloroplast. Thiamine diphosphate-binding positions include His140 and 181 to 183 (GHS). Asp212 lines the Mg(2+) pocket. Residues 213 to 214 (GA), Asn241, Tyr362, and Glu444 contribute to the thiamine diphosphate site. Asn241 contributes to the Mg(2+) binding site.

Belongs to the transketolase family. DXPS subfamily. As to quaternary structure, homodimer. The cofactor is Mg(2+). Thiamine diphosphate serves as cofactor.

The protein localises to the plastid. It is found in the chloroplast. The catalysed reaction is D-glyceraldehyde 3-phosphate + pyruvate + H(+) = 1-deoxy-D-xylulose 5-phosphate + CO2. The protein operates within metabolic intermediate biosynthesis; 1-deoxy-D-xylulose 5-phosphate biosynthesis; 1-deoxy-D-xylulose 5-phosphate from D-glyceraldehyde 3-phosphate and pyruvate: step 1/1. Catalyzes the acyloin condensation reaction between C atoms 2 and 3 of pyruvate and glyceraldehyde 3-phosphate to yield 1-deoxy-D-xylulose-5-phosphate (DXP). Is a limiting enzyme for plastidic isoprenoid biosynthesis and essential for chloroplast development. This chain is Probable 1-deoxy-D-xylulose-5-phosphate synthase 2, chloroplastic, found in Oryza sativa subsp. japonica (Rice).